Reading from the N-terminus, the 270-residue chain is Proteasome subunit alpha type-1 (270 aa).

Residues 239–270 (SMEAAEEAPAAEAESSSMQEEDKGTDAAPMDI) are disordered. Positions 245-256 (EAPAAEAESSSM) are enriched in low complexity.

It belongs to the peptidase T1A family. As to quaternary structure, the 26S proteasome consists of a 20S proteasome core and two 19S regulatory subunits. The 20S proteasome core is composed of 28 subunits that are arranged in four stacked rings, resulting in a barrel-shaped structure. The two end rings are each formed by seven alpha subunits, and the two central rings are each formed by seven beta subunits. The catalytic chamber with the active sites is on the inside of the barrel.

Its subcellular location is the cytoplasm. The protein localises to the nucleus. Functionally, the proteasome is a multicatalytic proteinase complex which is characterized by its ability to cleave peptides with Arg, Phe, Tyr, Leu, and Glu adjacent to the leaving group at neutral or slightly basic pH. The proteasome has an ATP-dependent proteolytic activity. In Oryza sativa subsp. japonica (Rice), this protein is Proteasome subunit alpha type-1 (PAF1).